Here is a 235-residue protein sequence, read N- to C-terminus: UPF0502 protein Bmul_3231/BMULJ_05293 (235 aa).

It belongs to the UPF0502 family.

This chain is UPF0502 protein Bmul_3231/BMULJ_05293, found in Burkholderia multivorans (strain ATCC 17616 / 249).